The following is a 111-amino-acid chain: Universal stress protein B (111 aa).

Helical transmembrane passes span 1–21 and 90–110; these read MIST…NMAR and FILT…LMLW.

The protein belongs to the universal stress protein B family.

Its subcellular location is the cell inner membrane. In Yersinia pseudotuberculosis serotype O:1b (strain IP 31758), this protein is Universal stress protein B.